The chain runs to 209 residues: Uridine kinase (209 aa).

12–19 provides a ligand contact to ATP; it reads GGSGSGKT.

It belongs to the uridine kinase family.

The protein localises to the cytoplasm. The catalysed reaction is uridine + ATP = UMP + ADP + H(+). It catalyses the reaction cytidine + ATP = CMP + ADP + H(+). It functions in the pathway pyrimidine metabolism; CTP biosynthesis via salvage pathway; CTP from cytidine: step 1/3. It participates in pyrimidine metabolism; UMP biosynthesis via salvage pathway; UMP from uridine: step 1/1. This is Uridine kinase from Streptococcus mutans serotype c (strain ATCC 700610 / UA159).